The chain runs to 684 residues: Dipeptidyl-peptidase 5 (684 aa).

The first 24 residues, 1–24 (MNKKIFSMMAASIIGSAAMTPSAG), serve as a signal peptide directing secretion. WD repeat units follow at residues 87 to 127 (DTES…TERR), 220 to 259 (KPWS…DIYI), and 323 to 363 (TFDY…GKIR). Catalysis depends on charge relay system residues S542, D627, and H659.

Belongs to the peptidase S9C family. In terms of assembly, homodimer.

The protein resides in the periplasm. In terms of biological role, catalyzes the removal of dipeptides from the N-terminus of oligopeptides. Prefers Ala and hydrophobic residues except Pro at the P1 position, and has no preference for P2 residues. Shows high dipeptidyl peptidase activity toward the synthetic substrates Lys-Ala-, Gly-Phe-, Met-Leu-, and Ser-Tyr-methylcoumaryl-7-amide (MCA), and slowly hydrolyzes Val-Tyr-MCA. Is likely involved in amino acid metabolism and bacterial growth of asaccharolytic P.gingivalis, that utilizes amino acids from extracellular proteinaceous nutrients as energy and carbon sources. The chain is Dipeptidyl-peptidase 5 from Porphyromonas gingivalis (strain ATCC 33277 / DSM 20709 / CIP 103683 / JCM 12257 / NCTC 11834 / 2561).